The primary structure comprises 461 residues: Glycine--tRNA ligase (461 aa).

2 residues coordinate substrate: Arg-100 and Glu-174. ATP contacts are provided by residues 206–208 (RNE), 216–221 (FRTREF), 290–291 (EL), and 334–337 (GVDR). Position 221-225 (221-225 (FEQME)) interacts with substrate. Position 330 to 334 (330 to 334 (EPSVG)) interacts with substrate.

Belongs to the class-II aminoacyl-tRNA synthetase family. As to quaternary structure, homodimer.

It is found in the cytoplasm. The catalysed reaction is tRNA(Gly) + glycine + ATP = glycyl-tRNA(Gly) + AMP + diphosphate. Functionally, catalyzes the attachment of glycine to tRNA(Gly). This Caldanaerobacter subterraneus subsp. tengcongensis (strain DSM 15242 / JCM 11007 / NBRC 100824 / MB4) (Thermoanaerobacter tengcongensis) protein is Glycine--tRNA ligase.